Consider the following 275-residue polypeptide: Small ribosomal subunit protein uS2 (275 aa).

Residues 232-256 (ARATDGKPEPEPVPGQELGADEPLA) are disordered.

The protein belongs to the universal ribosomal protein uS2 family.

This Acidothermus cellulolyticus (strain ATCC 43068 / DSM 8971 / 11B) protein is Small ribosomal subunit protein uS2.